The primary structure comprises 351 residues: Sulfate/thiosulfate import ATP-binding protein CysA (351 aa).

The region spanning 5 to 235 (IVVADATKRY…PANAFVMSFL (231 aa)) is the ABC transporter domain. Residue 37–44 (GPSGSGKS) coordinates ATP.

This sequence belongs to the ABC transporter superfamily. Sulfate/tungstate importer (TC 3.A.1.6) family. In terms of assembly, the complex is composed of two ATP-binding proteins (CysA), two transmembrane proteins (CysT and CysW) and a solute-binding protein (CysP).

It localises to the cell membrane. It carries out the reaction sulfate(out) + ATP + H2O = sulfate(in) + ADP + phosphate + H(+). It catalyses the reaction thiosulfate(out) + ATP + H2O = thiosulfate(in) + ADP + phosphate + H(+). Functionally, part of the ABC transporter complex CysAWTP involved in sulfate/thiosulfate import. Responsible for energy coupling to the transport system. This chain is Sulfate/thiosulfate import ATP-binding protein CysA, found in Mycobacterium bovis (strain ATCC BAA-935 / AF2122/97).